The chain runs to 753 residues: Catalase-peroxidase (753 aa).

The segment at residues 91 to 243 (WHSAGTYRIG…LGAVQMGLIY (153 aa)) is a cross-link (tryptophyl-tyrosyl-methioninium (Trp-Tyr) (with M-269)). The active-site Proton acceptor is the histidine 92. Residues 243–269 (YVNPEGPDGNPDPLAAAHDIRETFARM) constitute a cross-link (tryptophyl-tyrosyl-methioninium (Tyr-Met) (with W-91)). Residue histidine 284 coordinates heme b.

It belongs to the peroxidase family. Peroxidase/catalase subfamily. In terms of assembly, homodimer or homotetramer. Heme b serves as cofactor. In terms of processing, formation of the three residue Trp-Tyr-Met cross-link is important for the catalase, but not the peroxidase activity of the enzyme.

It carries out the reaction H2O2 + AH2 = A + 2 H2O. The enzyme catalyses 2 H2O2 = O2 + 2 H2O. In terms of biological role, bifunctional enzyme with both catalase and broad-spectrum peroxidase activity. This chain is Catalase-peroxidase, found in Paraburkholderia xenovorans (strain LB400).